Reading from the N-terminus, the 317-residue chain is uncharacterized protein (317 aa).

Transmembrane regions (helical) follow at residues 14–34 (IPLL…ATVS), 72–92 (LIGF…YGAV), 119–139 (LLFG…LDIA), 196–216 (TLLN…FCKQ), 230–250 (LFLG…ADVL), and 291–307 (SNML…WYTY). Solcar repeat units lie at residues 18–103 (SNDL…LKQR), 113–217 (LENH…CKQK), and 224–313 (LTAF…VSKM).

It belongs to the mitochondrial carrier (TC 2.A.29) family.

The protein localises to the mitochondrion inner membrane. This is an uncharacterized protein from Schizosaccharomyces pombe (strain 972 / ATCC 24843) (Fission yeast).